Consider the following 502-residue polypeptide: Cytochrome P450 71B10 (502 aa).

A helical transmembrane segment spans residues 1-21 (MTVLWFVSLILLISILLVAVK). Cys443 serves as a coordination point for heme.

The protein belongs to the cytochrome P450 family. The cofactor is heme.

The protein localises to the membrane. This chain is Cytochrome P450 71B10 (CYP71B10), found in Arabidopsis thaliana (Mouse-ear cress).